The chain runs to 373 residues: 4-hydroxy-3-methylbut-2-en-1-yl diphosphate synthase (flavodoxin) (373 aa).

[4Fe-4S] cluster contacts are provided by cysteine 270, cysteine 273, cysteine 305, and glutamate 312.

It belongs to the IspG family. [4Fe-4S] cluster serves as cofactor.

The enzyme catalyses (2E)-4-hydroxy-3-methylbut-2-enyl diphosphate + oxidized [flavodoxin] + H2O + 2 H(+) = 2-C-methyl-D-erythritol 2,4-cyclic diphosphate + reduced [flavodoxin]. It participates in isoprenoid biosynthesis; isopentenyl diphosphate biosynthesis via DXP pathway; isopentenyl diphosphate from 1-deoxy-D-xylulose 5-phosphate: step 5/6. Its function is as follows. Converts 2C-methyl-D-erythritol 2,4-cyclodiphosphate (ME-2,4cPP) into 1-hydroxy-2-methyl-2-(E)-butenyl 4-diphosphate. In Pectobacterium atrosepticum (strain SCRI 1043 / ATCC BAA-672) (Erwinia carotovora subsp. atroseptica), this protein is 4-hydroxy-3-methylbut-2-en-1-yl diphosphate synthase (flavodoxin).